We begin with the raw amino-acid sequence, 553 residues long: Probable malate:quinone oxidoreductase (553 aa).

Residues 524 to 553 form a disordered region; the sequence is PPPKIDVNTPSQATGTAPARPAKASADMAL.

Belongs to the MQO family. Requires FAD as cofactor.

It carries out the reaction (S)-malate + a quinone = a quinol + oxaloacetate. It participates in carbohydrate metabolism; tricarboxylic acid cycle; oxaloacetate from (S)-malate (quinone route): step 1/1. The protein is Probable malate:quinone oxidoreductase of Burkholderia lata (strain ATCC 17760 / DSM 23089 / LMG 22485 / NCIMB 9086 / R18194 / 383).